A 170-amino-acid chain; its full sequence is Peptide deformylase (170 aa).

Fe cation contacts are provided by C94 and H136. Residue E137 is part of the active site. Fe cation is bound at residue H140.

Belongs to the polypeptide deformylase family. Requires Fe(2+) as cofactor.

It carries out the reaction N-terminal N-formyl-L-methionyl-[peptide] + H2O = N-terminal L-methionyl-[peptide] + formate. Functionally, removes the formyl group from the N-terminal Met of newly synthesized proteins. Requires at least a dipeptide for an efficient rate of reaction. N-terminal L-methionine is a prerequisite for activity but the enzyme has broad specificity at other positions. The protein is Peptide deformylase of Xylella fastidiosa (strain M12).